Here is a 472-residue protein sequence, read N- to C-terminus: UDP-N-acetylmuramate--L-alanine ligase (472 aa).

123-129 contributes to the ATP binding site; that stretch reads GSHGKTT.

The protein belongs to the MurCDEF family.

The protein localises to the cytoplasm. The enzyme catalyses UDP-N-acetyl-alpha-D-muramate + L-alanine + ATP = UDP-N-acetyl-alpha-D-muramoyl-L-alanine + ADP + phosphate + H(+). It participates in cell wall biogenesis; peptidoglycan biosynthesis. Cell wall formation. The sequence is that of UDP-N-acetylmuramate--L-alanine ligase from Solibacter usitatus (strain Ellin6076).